The chain runs to 434 residues: [Arg8]-vasotocin receptor (434 aa).

Residues 1 to 27 (MGRIANQTTASNDTDPFGRNEEVAKME) lie on the Extracellular side of the membrane. N-linked (GlcNAc...) asparagine glycosylation is found at Asn-6 and Asn-12. A helical membrane pass occupies residues 28–48 (ITVLSVTFFVAVIGNLSVLLA). The Cytoplasmic portion of the chain corresponds to 49–67 (MHNTKKKSSRMHLFIKHLS). The helical transmembrane segment at 68–88 (LADMVVAFFQVLPQLCWEITF) threads the bilayer. Residues 89–98 (RFYGPDFLCR) are Extracellular-facing. An intrachain disulfide couples Cys-97 to Cys-176. Residues 99–119 (IVKHLQVLGMFASTYMMVMMT) traverse the membrane as a helical segment. The Cytoplasmic portion of the chain corresponds to 120–141 (LDRYIAICHPLKTLQQPTQRAY). The chain crosses the membrane as a helical span at residues 142 to 162 (IMIGSTWLCSLLLSTPQYFIF). Topologically, residues 163–191 (SLSEIQNGSYVYDCWGHFIEPWGIRAYIT) are extracellular. Residues 192–212 (WITVGIFLIPVIILMICYGFI) form a helical membrane-spanning segment. Topologically, residues 213 to 257 (CHSIWKNIKCKTMRGTRNTKDGMIGKVSVSSVTIISRAKLRTVKM) are cytoplasmic. The chain crosses the membrane as a helical span at residues 258-278 (TLVIVLAYIVCWAPFFIVQMW). Residues 279–295 (SVWDENFSWDDSENAAV) are Extracellular-facing. Residues 296–316 (TLSALLASLNSCCNPWIYMLF) traverse the membrane as a helical segment. The Cytoplasmic segment spans residues 317–434 (SGHLLYDFLR…KSSQCMSKES (118 aa)).

The protein belongs to the G-protein coupled receptor 1 family. Vasopressin/oxytocin receptor subfamily. As to expression, expressed in pituitary, liver, gills, swim bladder and lateral line.

The protein localises to the cell membrane. Functionally, binds to vasotocin. Produces an induction of membrane chloride currents indicating that it is coupled to the inositol phosphate/calcium pathway. This is [Arg8]-vasotocin receptor from Catostomus commersonii (White sucker).